A 613-amino-acid chain; its full sequence is Ribosome-associated molecular chaperone SSB1 (613 aa).

A nucleotide binding domain (NBD) region spans residues 1–391 (MADGVFQGAI…ILTGQSTNDD (391 aa)). Residues 16-18 (TTY), Lys73, 205-207 (GGT), 271-278 (ERAKRSLS), and Gly342 each bind ATP. Residues 392–402 (TKDLLLLDVIP) form an inter-domain linker region. Positions 403–613 (LSLGVAMQGN…RAVTKGMATR (211 aa)) are substrate binding domain (SBD). The tract at residues 516-612 (TEEIEKMISD…KRAVTKGMAT (97 aa)) is lid domain (SBDalpha). A Nuclear export signal motif is present at residues 574 to 582 (IEAALSDAL).

It belongs to the heat shock protein 70 family. Ssb-type Hsp70 subfamily. In terms of assembly, binds to ribosomes. Binds close to the ribosomal tunnel exit via contacts with both ribosomal proteins and rRNA. Directly interacts with nascent polypeptides. This interaction is dependent on the ribosome-associated complex (RAC). Interacts with SSE1. Interacts with FES1.

The protein localises to the cytoplasm. It carries out the reaction ATP + H2O = ADP + phosphate + H(+). Functionally, ribosome-bound, Hsp70-type chaperone that assists in the cotranslational folding of newly synthesized proteins in the cytosol. Stimulates folding by interacting with nascent chains, binding to short, largely hydrophobic sequences exposed by unfolded proteins, thereby stabilizing longer, more slowly translated, and aggregation-prone nascent polypeptides and domains that cannot fold stably until fully synthesized. The Hsp70-protein substrate interaction depends on ATP-binding and on allosteric regulation between the NBD and the SBD. The ATP-bound state is characterized by a fast exchange rate of substrate (low affinity state), while in the ADP-bound state exchange is much slower (high affinity state). During the Hsp70 cycle, the chaperone switches between the ATP-bound state (open conformation) and the ADP-bound state (closed conformation) by major conformational rearrangements involving mainly the lid domain. Ssb cooperates with a specific Hsp40/Hsp70 co-chaperone termed the ribosome-associated complex (RAC), which stimulates the ATPase activity of the ribosome-associated pool of Ssbs and switches it to the high affinity substrate binding state. Hsp110 chaperone SSE1 and FES1 act as nucleotide exchange factors that cause substrate release. In Candida albicans (strain WO-1) (Yeast), this protein is Ribosome-associated molecular chaperone SSB1 (SSB1).